Consider the following 917-residue polypeptide: Isoleucine--tRNA ligase (917 aa).

The short motif at 57-67 (PYANGNLHMGH) is the 'HIGH' region element. Residue Glu-554 coordinates L-isoleucyl-5'-AMP. The 'KMSKS' region motif lies at 595–599 (KMSKS). Lys-598 is an ATP binding site. Zn(2+) is bound by residues Cys-886, Cys-889, Cys-906, and Cys-909.

The protein belongs to the class-I aminoacyl-tRNA synthetase family. IleS type 1 subfamily. As to quaternary structure, monomer. The cofactor is Zn(2+).

The protein localises to the cytoplasm. It carries out the reaction tRNA(Ile) + L-isoleucine + ATP = L-isoleucyl-tRNA(Ile) + AMP + diphosphate. Catalyzes the attachment of isoleucine to tRNA(Ile). As IleRS can inadvertently accommodate and process structurally similar amino acids such as valine, to avoid such errors it has two additional distinct tRNA(Ile)-dependent editing activities. One activity is designated as 'pretransfer' editing and involves the hydrolysis of activated Val-AMP. The other activity is designated 'posttransfer' editing and involves deacylation of mischarged Val-tRNA(Ile). This chain is Isoleucine--tRNA ligase, found in Staphylococcus aureus (strain Mu3 / ATCC 700698).